Here is a 315-residue protein sequence, read N- to C-terminus: MSKPLRIVFAGTPDFAAQHLAALLSSEHEVIAVYTQPDRPAGRGKKLTASPVKTIALEHNIPVYQPENFKSDEAKQALADLNADIMVVVAYGLLLPQAVLDTPKLGCINVHGSILPRWRGAAPIQRSIWAGDAETGVTIMQMDIGLDTGDMLKIATLPIDASDTSATMYDKLAKLGPVVLVECLADIAAGTAIAIKQDDERANYAKKLSKEEARINWQDDAEHIERCVRAFNPWPMSHFEVAENSIKVWQSRVEASSHDAPAGTILKADKSGIYVATGHGCLVLEQIQIPGKKAMPVQDVLNARAAWFEVGSVLS.

Residue 113–116 participates in (6S)-5,6,7,8-tetrahydrofolate binding; that stretch reads SILP.

It belongs to the Fmt family.

The catalysed reaction is L-methionyl-tRNA(fMet) + (6R)-10-formyltetrahydrofolate = N-formyl-L-methionyl-tRNA(fMet) + (6S)-5,6,7,8-tetrahydrofolate + H(+). Functionally, attaches a formyl group to the free amino group of methionyl-tRNA(fMet). The formyl group appears to play a dual role in the initiator identity of N-formylmethionyl-tRNA by promoting its recognition by IF2 and preventing the misappropriation of this tRNA by the elongation apparatus. The chain is Methionyl-tRNA formyltransferase from Vibrio vulnificus (strain CMCP6).